Consider the following 660-residue polypeptide: Solute carrier family 5 member 4B (660 aa).

Residues 1–27 lie on the Cytoplasmic side of the membrane; the sequence is MASTLSPSITPQTEEPPVVPVRIQNAA. The chain crosses the membrane as a helical span at residues 28–48; the sequence is DISVIVIYFIVVLAVGLWSMV. Topologically, residues 49–54 are extracellular; sequence RSNRGT. Residues 55 to 75 form a helical membrane-spanning segment; sequence VGGFFLAGHDMAWWPMGASLF. The Cytoplasmic segment spans residues 76 to 82; it reads ASNIGSN. Residues 83–103 traverse the membrane as a helical segment; it reads HFVGLAGTGAASGIAIAAVEW. Residues 104–105 lie on the Extracellular side of the membrane; it reads NA. Residues 106–126 traverse the membrane as a helical segment; that stretch reads LLMVLVLGWVFLPIYIKAGVL. Over 127–142 the chain is Cytoplasmic; the sequence is TMPEYLRKRFGGKRLQ. Residues 143 to 163 traverse the membrane as a helical segment; the sequence is IYLSVLSLFIMVALQTSSIIF. Topologically, residues 164–166 are extracellular; the sequence is SGA. A helical membrane pass occupies residues 167 to 187; that stretch reads IFIQLALGLNLYLAVFILLAI. The Cytoplasmic portion of the chain corresponds to 188–208; that stretch reads TAFYTVAGGLASVIYTDSVQT. A helical membrane pass occupies residues 209–229; sequence FIMLLGSLILMGFAFAEVGGY. Topologically, residues 230 to 277 are extracellular; it reads ESFTEKYMNAIPSVVEGDNLTISPKCYTPQPDSFHVFRDPVTGDIPWP. A helical membrane pass occupies residues 278-298; sequence GLIFGMTILAIWYWCADQVIV. At 299–313 the chain is on the cytoplasmic side; sequence QRCLCGKNMSHVKAA. The chain crosses the membrane as a helical span at residues 314 to 334; that stretch reads CILCGYLKLLPMFLMVMPGMI. Residues 335-380 are Extracellular-facing; that stretch reads SRILYTDKVACVVPSECEKQCGTAVGCTNYAYPTLVLELMPDGLRG. The helical transmembrane segment at 381 to 401 threads the bilayer; that stretch reads LMLSVMLASLMSSLTSIFNSA. Residues 402–423 are Cytoplasmic-facing; the sequence is STLFTIDLYTKIRKKASERELM. Residues 424–444 traverse the membrane as a helical segment; sequence IAGRIFGMVLIAVSILWVPLV. Residues 445–455 lie on the Extracellular side of the membrane; the sequence is QVSQNGQLFHY. A helical transmembrane segment spans residues 456–476; that stretch reads IGSVSSYLGPPLGAVFMLAIF. Residues 477–484 lie on the Cytoplasmic side of the membrane; the sequence is FKRVNEQG. The chain crosses the membrane as a helical span at residues 485–505; it reads AFWGLMVGLVVGLIRLIAEFV. At 506–526 the chain is on the extracellular side; it reads YGTGSCVAPSNCPKIICGVHY. A helical transmembrane segment spans residues 527–547; it reads MYFAIILFFVSIIVILGVSFL. Residues 548–639 lie on the Cytoplasmic side of the membrane; the sequence is TEPIPDVHLY…DTSEKPLWRT (92 aa). Residues 640–660 form a helical membrane-spanning segment; it reads VMNINAVLLLGVAVFVHAYFA.

Belongs to the sodium:solute symporter (SSF) (TC 2.A.21) family. In terms of tissue distribution, expressed in small intestine. Expressed in kidney.

It is found in the cell membrane. The enzyme catalyses D-glucose(out) + 2 Na(+)(out) = D-glucose(in) + 2 Na(+)(in). Inhibited by phlorizin. In terms of biological role, low-affinity sodium/D-glucose symporter. Generates D-glucose-induced depolarization in a pH-independent manner. This Mus musculus (Mouse) protein is Solute carrier family 5 member 4B.